The primary structure comprises 642 residues: Mini-chromosome maintenance complex-binding protein (642 aa).

Over residues 151–161 (ARVSPSTSYTP) the composition is skewed to polar residues. The disordered stretch occupies residues 151–197 (ARVSPSTSYTPSRHKRSYEDDDDMDLQPNKQKDQHAGARQAGSVGGL). The residue at position 154 (Ser-154) is a Phosphoserine. Residue Thr-160 is modified to Phosphothreonine. Phosphoserine is present on residues Ser-167 and Ser-298.

It belongs to the MCMBP family. As to quaternary structure, interacts with the MCM complex: associates with the MCM3-7 complex which lacks MCM2, while it does not interact with the MCM complex when MCM2 is present (MCM2-7 complex). Interacts with the RPA complex, when composed of all RPA1, RPA2 and RPA3 components, but not with RPA1 or RPA2 alone.

Its subcellular location is the nucleus. In terms of biological role, associated component of the MCM complex that acts as a regulator of DNA replication. Binds to the MCM complex during late S phase and promotes the disassembly of the MCM complex from chromatin, thereby acting as a key regulator of pre-replication complex (pre-RC) unloading from replicated DNA. Can dissociate the MCM complex without addition of ATP; probably acts by destabilizing interactions of each individual subunits of the MCM complex. Required for sister chromatid cohesion. The protein is Mini-chromosome maintenance complex-binding protein (MCMBP) of Homo sapiens (Human).